The chain runs to 357 residues: RNA 3'-terminal phosphate cyclase (357 aa).

Residues Q102 and 293–296 (HMGD) contribute to the ATP site. The active-site Tele-AMP-histidine intermediate is the H319.

This sequence belongs to the RNA 3'-terminal cyclase family. Type 1 subfamily.

Its subcellular location is the cytoplasm. The enzyme catalyses a 3'-end 3'-phospho-ribonucleotide-RNA + ATP = a 3'-end 2',3'-cyclophospho-ribonucleotide-RNA + AMP + diphosphate. Its function is as follows. Catalyzes the conversion of 3'-phosphate to a 2',3'-cyclic phosphodiester at the end of RNA. The mechanism of action of the enzyme occurs in 3 steps: (A) adenylation of the enzyme by ATP; (B) transfer of adenylate to an RNA-N3'P to produce RNA-N3'PP5'A; (C) and attack of the adjacent 2'-hydroxyl on the 3'-phosphorus in the diester linkage to produce the cyclic end product. The biological role of this enzyme is unknown but it is likely to function in some aspects of cellular RNA processing. In Staphylothermus marinus (strain ATCC 43588 / DSM 3639 / JCM 9404 / F1), this protein is RNA 3'-terminal phosphate cyclase.